Here is a 637-residue protein sequence, read N- to C-terminus: Biosynthetic arginine decarboxylase (637 aa).

K101 is subject to N6-(pyridoxal phosphate)lysine. F286–Y296 contacts substrate.

Belongs to the Orn/Lys/Arg decarboxylase class-II family. SpeA subfamily. It depends on Mg(2+) as a cofactor. Pyridoxal 5'-phosphate is required as a cofactor.

The catalysed reaction is L-arginine + H(+) = agmatine + CO2. It participates in amine and polyamine biosynthesis; agmatine biosynthesis; agmatine from L-arginine: step 1/1. In terms of biological role, catalyzes the biosynthesis of agmatine from arginine. This is Biosynthetic arginine decarboxylase from Shewanella sediminis (strain HAW-EB3).